Here is a 122-residue protein sequence, read N- to C-terminus: Histone H2B (122 aa).

Residues M1–K31 form a disordered region. The residue at position 2 (P2) is a N,N-dimethylproline. Residue Q10 forms an Isoglutamyl lysine isopeptide (Gln-Lys) (interchain with K-5 in histone H4) linkage. The O-linked (GlcNAc) serine glycan is linked to S109. A Glycyl lysine isopeptide (Lys-Gly) (interchain with G-Cter in ubiquitin) cross-link involves residue K117.

Belongs to the histone H2B family. In terms of assembly, the nucleosome is a histone octamer containing two molecules each of H2A, H2B, H3 and H4 assembled in one H3-H4 heterotetramer and two H2A-H2B heterodimers. The octamer wraps approximately 147 bp of DNA. Post-translationally, monoubiquitination of Lys-117 gives a specific tag for epigenetic transcriptional activation and is also prerequisite for histone H3 'Lys-4' and 'Lys-79' methylation. GlcNAcylation at Ser-109 promotes monoubiquitination of Lys-117. It fluctuates in response to extracellular glucose, and associates with transcribed genes.

The protein resides in the nucleus. It localises to the chromosome. Functionally, core component of nucleosome. Nucleosomes wrap and compact DNA into chromatin, limiting DNA accessibility to the cellular machineries which require DNA as a template. Histones thereby play a central role in transcription regulation, DNA repair, DNA replication and chromosomal stability. DNA accessibility is regulated via a complex set of post-translational modifications of histones, also called histone code, and nucleosome remodeling. The sequence is that of Histone H2B from Patiria pectinifera (Starfish).